Consider the following 315-residue polypeptide: Acetyl-coenzyme A carboxylase carboxyl transferase subunit alpha (315 aa).

The region spanning R39–M293 is the CoA carboxyltransferase C-terminal domain.

Belongs to the AccA family. Acetyl-CoA carboxylase is a heterohexamer composed of biotin carboxyl carrier protein (AccB), biotin carboxylase (AccC) and two subunits each of ACCase subunit alpha (AccA) and ACCase subunit beta (AccD).

Its subcellular location is the cytoplasm. The catalysed reaction is N(6)-carboxybiotinyl-L-lysyl-[protein] + acetyl-CoA = N(6)-biotinyl-L-lysyl-[protein] + malonyl-CoA. Its pathway is lipid metabolism; malonyl-CoA biosynthesis; malonyl-CoA from acetyl-CoA: step 1/1. In terms of biological role, component of the acetyl coenzyme A carboxylase (ACC) complex. First, biotin carboxylase catalyzes the carboxylation of biotin on its carrier protein (BCCP) and then the CO(2) group is transferred by the carboxyltransferase to acetyl-CoA to form malonyl-CoA. This chain is Acetyl-coenzyme A carboxylase carboxyl transferase subunit alpha, found in Pseudomonas entomophila (strain L48).